Here is a 78-residue protein sequence, read N- to C-terminus: MSKEKLDRINELSKLAKTVGLTKKQAMEQKALRNEYLSAFRSSFTDHLHTVKVVDAKGNDVTPQKLKDSKAQKHKRLH.

The disordered stretch occupies residues 56–78 (AKGNDVTPQKLKDSKAQKHKRLH).

The protein belongs to the UPF0291 family.

The protein localises to the cytoplasm. The chain is UPF0291 protein ABC2165 from Shouchella clausii (strain KSM-K16) (Alkalihalobacillus clausii).